Here is a 430-residue protein sequence, read N- to C-terminus: UPF0597 protein Clos_2050 (430 aa).

The protein belongs to the UPF0597 family.

The polypeptide is UPF0597 protein Clos_2050 (Alkaliphilus oremlandii (strain OhILAs) (Clostridium oremlandii (strain OhILAs))).